The sequence spans 308 residues: Malate dehydrogenase (308 aa).

Residues 6 to 11 (GSGRVG) and aspartate 31 contribute to the NAD(+) site. Residues arginine 80 and arginine 86 each contribute to the substrate site. NAD(+) contacts are provided by residues asparagine 93 and 116–118 (TTN). Residues asparagine 118 and arginine 149 each contribute to the substrate site. The active-site Proton acceptor is histidine 173.

It belongs to the LDH/MDH superfamily.

The enzyme catalyses (S)-malate + NAD(+) = oxaloacetate + NADH + H(+). In terms of biological role, catalyzes the reversible oxidation of malate to oxaloacetate. In Thermoproteus tenax (strain ATCC 35583 / DSM 2078 / JCM 9277 / NBRC 100435 / Kra 1), this protein is Malate dehydrogenase (mdh).